The chain runs to 224 residues: 7-cyano-7-deazaguanine synthase (224 aa).

12 to 22 (LSGGLDSSTVT) provides a ligand contact to ATP. C193, C201, C204, and C207 together coordinate Zn(2+).

This sequence belongs to the QueC family. Zn(2+) serves as cofactor.

It catalyses the reaction 7-carboxy-7-deazaguanine + NH4(+) + ATP = 7-cyano-7-deazaguanine + ADP + phosphate + H2O + H(+). Its pathway is purine metabolism; 7-cyano-7-deazaguanine biosynthesis. Functionally, catalyzes the ATP-dependent conversion of 7-carboxy-7-deazaguanine (CDG) to 7-cyano-7-deazaguanine (preQ(0)). The chain is 7-cyano-7-deazaguanine synthase from Prochlorococcus marinus (strain MIT 9301).